A 140-amino-acid polypeptide reads, in one-letter code: Nucleoside diphosphate kinase (140 aa).

The ATP site is built by K11, F59, R87, T93, R104, and N114. Residue H117 is the Pros-phosphohistidine intermediate of the active site.

The protein belongs to the NDK family. Homotetramer. The cofactor is Mg(2+).

The protein resides in the cytoplasm. The enzyme catalyses a 2'-deoxyribonucleoside 5'-diphosphate + ATP = a 2'-deoxyribonucleoside 5'-triphosphate + ADP. It catalyses the reaction a ribonucleoside 5'-diphosphate + ATP = a ribonucleoside 5'-triphosphate + ADP. In terms of biological role, major role in the synthesis of nucleoside triphosphates other than ATP. The ATP gamma phosphate is transferred to the NDP beta phosphate via a ping-pong mechanism, using a phosphorylated active-site intermediate. This is Nucleoside diphosphate kinase from Brucella melitensis biotype 1 (strain ATCC 23456 / CCUG 17765 / NCTC 10094 / 16M).